The chain runs to 446 residues: MRTLNTSTMDGTGLVVERDFSFRILTACFLSLLILSTLLGNTLVCAAVIRFRHLRSKVTNFFVISLAVSDLLVAVLVMPWKAVAEIAGFWPFGSFCNIWVAFDIMCSTASILNLCVISVDRYWAISSPFRYERKMTPKAAFILISVAWTLSVLISFIPVQLSWHKAKPTSPSDGNVTSLGKTTHNCDSSLSRTYAISSSLISFYIPVAIMIVTYTRIYRIAQKQIRRISALERAAVHAKNCQTTAGNGNPAECSQPESSFKMSFKRETKVLKTLSVIMGVFVCCWLPFFILNCMVPFCGSGETKPFCIDSITFDVFVWFGWANSSLNPIIYAFNADFRKAFSTLLGCYRLCPTSTNAIETVSINNNGAVVFSSHHEPRGSISKDCNLVYLIPHAVGSSEDLKKEEAGGIASPLEKLSPALSVILDYDTDVSLEKIQPITQNGQHPT.

Residues 1–23 (MRTLNTSTMDGTGLVVERDFSFR) lie on the Extracellular side of the membrane. An N-linked (GlcNAc...) asparagine glycan is attached at N5. A helical transmembrane segment spans residues 24–49 (ILTACFLSLLILSTLLGNTLVCAAVI). Residues 50-60 (RFRHLRSKVTN) lie on the Cytoplasmic side of the membrane. A helical membrane pass occupies residues 61-87 (FFVISLAVSDLLVAVLVMPWKAVAEIA). The Extracellular segment spans residues 88–96 (GFWPFGSFC). A disulfide bond links C96 and C186. The helical transmembrane segment at 97–119 (NIWVAFDIMCSTASILNLCVISV) threads the bilayer. Residues 120–138 (DRYWAISSPFRYERKMTPK) are Cytoplasmic-facing. A helical transmembrane segment spans residues 139–163 (AAFILISVAWTLSVLISFIPVQLSW). Residues 164–192 (HKAKPTSPSDGNVTSLGKTTHNCDSSLSR) lie on the Extracellular side of the membrane. Residues 193 to 218 (TYAISSSLISFYIPVAIMIVTYTRIY) form a helical membrane-spanning segment. The Cytoplasmic portion of the chain corresponds to 219-272 (RIAQKQIRRISALERAAVHAKNCQTTAGNGNPAECSQPESSFKMSFKRETKVLK). A helical transmembrane segment spans residues 273–299 (TLSVIMGVFVCCWLPFFILNCMVPFCG). At 300–312 (SGETKPFCIDSIT) the chain is on the extracellular side. The chain crosses the membrane as a helical span at residues 313-337 (FDVFVWFGWANSSLNPIIYAFNADF). The Cytoplasmic portion of the chain corresponds to 338–446 (RKAFSTLLGC…PITQNGQHPT (109 aa)). 2 S-palmitoyl cysteine lipidation sites follow: C347 and C351.

It belongs to the G-protein coupled receptor 1 family. As to quaternary structure, interacts with DNAJC14 via its C-terminus. Interacts with DRD2. Interacts with DORIP1.

Its subcellular location is the cell membrane. It is found in the endoplasmic reticulum membrane. The protein resides in the cell projection. The protein localises to the cilium membrane. It localises to the dendrite. Its subcellular location is the dendritic spine. Dopamine receptor whose activity is mediated by G proteins which activate adenylyl cyclase. The sequence is that of D(1A) dopamine receptor (DRD1) from Sus scrofa (Pig).